We begin with the raw amino-acid sequence, 286 residues long: Formamidopyrimidine-DNA glycosylase (286 aa).

The Schiff-base intermediate with DNA role is filled by Pro2. The active-site Proton donor is Glu3. Lys61 serves as the catalytic Proton donor; for beta-elimination activity. Residues His103, Arg122, and Arg164 each coordinate DNA. An FPG-type zinc finger spans residues 250-284; the sequence is NAYGQTGEPCGRCGTQIVRENFMNRGSHYCPNCQK. Arg274 (proton donor; for delta-elimination activity) is an active-site residue.

This sequence belongs to the FPG family. As to quaternary structure, monomer. It depends on Zn(2+) as a cofactor.

The enzyme catalyses Hydrolysis of DNA containing ring-opened 7-methylguanine residues, releasing 2,6-diamino-4-hydroxy-5-(N-methyl)formamidopyrimidine.. The catalysed reaction is 2'-deoxyribonucleotide-(2'-deoxyribose 5'-phosphate)-2'-deoxyribonucleotide-DNA = a 3'-end 2'-deoxyribonucleotide-(2,3-dehydro-2,3-deoxyribose 5'-phosphate)-DNA + a 5'-end 5'-phospho-2'-deoxyribonucleoside-DNA + H(+). Functionally, involved in base excision repair of DNA damaged by oxidation or by mutagenic agents. Acts as a DNA glycosylase that recognizes and removes damaged bases. Has a preference for oxidized purines, such as 7,8-dihydro-8-oxoguanine (8-oxoG). Has AP (apurinic/apyrimidinic) lyase activity and introduces nicks in the DNA strand. Cleaves the DNA backbone by beta-delta elimination to generate a single-strand break at the site of the removed base with both 3'- and 5'-phosphates. The chain is Formamidopyrimidine-DNA glycosylase from Corynebacterium glutamicum (strain R).